An 828-amino-acid chain; its full sequence is Transcription factor SOX-6 (828 aa).

The tract at residues 1 to 51 is disordered; the sequence is MSSKQATSPFACAADGEDAMTQDLTSREKEEGSDQHVASHLPLHPIMHNKP. Basic and acidic residues predominate over residues 25-34; the sequence is TSREKEEGSD. Thr119 is modified (phosphothreonine). Residues 184-262 adopt a coiled-coil conformation; sequence LAEKERQLST…LLQQQIQVQG (79 aa). A disordered region spans residues 380–470; that stretch reads SPGAKMPSTP…KSSIPSPIGG (91 aa). Residues 393–402 are compositionally biased toward polar residues; it reads NTAGTVSPTG. A Phosphoserine modification is found at Ser399. Phosphothreonine is present on Thr401. Residues Lys404 and Lys417 each participate in a glycyl lysine isopeptide (Lys-Gly) (interchain with G-Cter in SUMO) cross-link. A phosphoserine mark is found at Ser439 and Ser442. The span at 439-461 shows a compositional bias: polar residues; sequence SPTSPTQNLFPASKTSPVNLPNK. A DNA-binding region (HMG box) is located at residues 621-689; it reads IKRPMNAFMV…IHLEKYPNYK (69 aa). The span at 753–781 shows a compositional bias: polar residues; the sequence is TPSPQMTSDCSSTSASPEPSLPVIQSTYG. The tract at residues 753–828 is disordered; that stretch reads TPSPQMTSDC…NEAPEAVSAN (76 aa). A compositionally biased stretch (acidic residues) spans 796-809; it reads NGEDEMEMYDDYED.

As to quaternary structure, homodimer. Interacts with DAZAP2. May interact with CENPK. In terms of processing, sumoylation inhibits the transcriptional activity. In terms of tissue distribution, expressed in a wide variety of tissues, most abundantly in skeletal musclen.

It localises to the nucleus. The protein resides in the cytoplasm. Functionally, transcription factor that plays a key role in several developmental processes, including neurogenesis, chondrocytes differentiation and cartilage formation. Specifically binds the 5'-AACAAT-3' DNA motif present in enhancers and super-enhancers and promotes expression of genes important for chondrogenesis. Required for overt chondrogenesis when condensed prechondrocytes differentiate into early stage chondrocytes: SOX5 and SOX6 cooperatively bind with SOX9 on active enhancers and super-enhancers associated with cartilage-specific genes, and thereby potentiate SOX9's ability to transactivate. Not involved in precartilaginous condensation, the first step in chondrogenesis, during which skeletal progenitors differentiate into prechondrocytes. Together with SOX5, required to form and maintain a pool of highly proliferating chondroblasts between epiphyses and metaphyses, to form columnar chondroblasts, delay chondrocyte prehypertrophy but promote hypertrophy, and to delay terminal differentiation of chondrocytes on contact with ossification fronts. Binds to the proximal promoter region of the myelin protein MPZ gene, and is thereby involved in the differentiation of oligodendroglia in the developing spinal tube. Binds to the gene promoter of MBP and acts as a transcriptional repressor. This is Transcription factor SOX-6 from Homo sapiens (Human).